The primary structure comprises 338 residues: Lipoate-protein ligase A (338 aa).

The BPL/LPL catalytic domain maps to 29–216 (PATQRVLFLW…AFFAHYGERV (188 aa)). Residues Arg71, 76 to 79 (GAVF), and Lys134 each bind ATP. Residue Lys134 coordinates (R)-lipoate.

Belongs to the LplA family. Monomer.

The protein resides in the cytoplasm. The enzyme catalyses L-lysyl-[lipoyl-carrier protein] + (R)-lipoate + ATP = N(6)-[(R)-lipoyl]-L-lysyl-[lipoyl-carrier protein] + AMP + diphosphate + H(+). It functions in the pathway protein modification; protein lipoylation via exogenous pathway; protein N(6)-(lipoyl)lysine from lipoate: step 1/2. Its pathway is protein modification; protein lipoylation via exogenous pathway; protein N(6)-(lipoyl)lysine from lipoate: step 2/2. In terms of biological role, catalyzes both the ATP-dependent activation of exogenously supplied lipoate to lipoyl-AMP and the transfer of the activated lipoyl onto the lipoyl domains of lipoate-dependent enzymes. This is Lipoate-protein ligase A from Salmonella choleraesuis (strain SC-B67).